The following is a 70-amino-acid chain: Protein SlyX homolog (70 aa).

The protein belongs to the SlyX family.

In Shewanella sp. (strain MR-4), this protein is Protein SlyX homolog.